A 203-amino-acid polypeptide reads, in one-letter code: Outer-membrane lipoprotein carrier protein (203 aa).

The N-terminal stretch at methionine 1–alanine 21 is a signal peptide. The interval glutamine 178–lysine 203 is disordered.

This sequence belongs to the LolA family. In terms of assembly, monomer.

The protein localises to the periplasm. Its function is as follows. Participates in the translocation of lipoproteins from the inner membrane to the outer membrane. Only forms a complex with a lipoprotein if the residue after the N-terminal Cys is not an aspartate (The Asp acts as a targeting signal to indicate that the lipoprotein should stay in the inner membrane). The protein is Outer-membrane lipoprotein carrier protein of Salmonella paratyphi A (strain ATCC 9150 / SARB42).